We begin with the raw amino-acid sequence, 669 residues long: Probable serine/threonine-protein kinase DDB_G0291918 (669 aa).

The 348-residue stretch at 13–360 (YNNIKELGRG…LKETLNHPFL (348 aa)) folds into the Protein kinase domain. ATP contacts are provided by residues 19-27 (LGRGVSGVV) and lysine 42. Aspartate 141 acts as the Proton acceptor in catalysis. Over residues 396–405 (QNQQQQQQQQ) the composition is skewed to low complexity. Disordered stretches follow at residues 396–518 (QNQQ…APTF) and 530–550 (FPKL…MNWR). Residues 406–418 (KSFSTSSLPQVNH) show a composition bias toward polar residues. Composition is skewed to low complexity over residues 419 to 449 (NNDT…NNNN) and 457 to 494 (QSNN…SSTD).

It belongs to the protein kinase superfamily. Ser/Thr protein kinase family.

The catalysed reaction is L-seryl-[protein] + ATP = O-phospho-L-seryl-[protein] + ADP + H(+). It catalyses the reaction L-threonyl-[protein] + ATP = O-phospho-L-threonyl-[protein] + ADP + H(+). The sequence is that of Probable serine/threonine-protein kinase DDB_G0291918 from Dictyostelium discoideum (Social amoeba).